Here is an 86-residue protein sequence, read N- to C-terminus: Small ribosomal subunit protein bS20 (86 aa).

Belongs to the bacterial ribosomal protein bS20 family.

Functionally, binds directly to 16S ribosomal RNA. This Kineococcus radiotolerans (strain ATCC BAA-149 / DSM 14245 / SRS30216) protein is Small ribosomal subunit protein bS20.